We begin with the raw amino-acid sequence, 134 residues long: Small ribosomal subunit protein uS8c (134 aa).

The protein belongs to the universal ribosomal protein uS8 family. In terms of assembly, part of the 30S ribosomal subunit.

It localises to the plastid. Its subcellular location is the chloroplast. Functionally, one of the primary rRNA binding proteins, it binds directly to 16S rRNA central domain where it helps coordinate assembly of the platform of the 30S subunit. This Nicotiana tabacum (Common tobacco) protein is Small ribosomal subunit protein uS8c (rps8).